Here is a 216-residue protein sequence, read N- to C-terminus: Ras-related protein Rab-5C (216 aa).

Residues serine 30, alanine 31, glycine 33, lysine 34, serine 35, serine 36, histidine 47, glutamate 48, threonine 53, and glycine 79 each coordinate GTP. Serine 35 is a binding site for Mg(2+). Short sequence motifs (switch) lie at residues 45–57 (QFHEYQESTIGAA) and 78–94 (AGQERYHSLAPMYYRGA). Mg(2+) is bound at residue threonine 53. Serine 85 is modified (phosphoserine). Positions 134, 135, 137, 165, and 166 each coordinate GTP. The disordered stretch occupies residues 185 to 216 (NEPQNAAGAPSRNRGVDLQENSPASRSQCCSN). Residues 203–216 (QENSPASRSQCCSN) are compositionally biased toward polar residues. 2 S-geranylgeranyl cysteine lipidation sites follow: cysteine 213 and cysteine 214.

This sequence belongs to the small GTPase superfamily. Rab family. As to quaternary structure, interacts with EEA1 and INCA1. Interacts with GDI1, GDI2, CHML and CHM; phosphorylation at Ser-85 disrupts this interaction. It depends on Mg(2+) as a cofactor. In terms of processing, phosphorylation of Ser-85 in the switch II region by LRRK2 prevents the association of RAB regulatory proteins, including CHM, CHML and RAB GDP dissociation inhibitors GDI1 and GDI2.

The protein localises to the cell membrane. Its subcellular location is the early endosome membrane. The protein resides in the melanosome. It catalyses the reaction GTP + H2O = GDP + phosphate + H(+). Its activity is regulated as follows. Regulated by guanine nucleotide exchange factors (GEFs) which promote the exchange of bound GDP for free GTP. Regulated by GTPase activating proteins (GAPs) which increase the GTP hydrolysis activity. Inhibited by GDP dissociation inhibitors (GDIs). The small GTPases Rab are key regulators of intracellular membrane trafficking, from the formation of transport vesicles to their fusion with membranes. Rabs cycle between an inactive GDP-bound form and an active GTP-bound form that is able to recruit to membranes different sets of downstream effectors directly responsible for vesicle formation, movement, tethering and fusion. The chain is Ras-related protein Rab-5C (RAB5C) from Canis lupus familiaris (Dog).